A 297-amino-acid polypeptide reads, in one-letter code: N-acetylneuraminate lyase (297 aa).

Aceneuramate is bound by residues Ser-47 and Thr-48. Catalysis depends on Tyr-137, which acts as the Proton donor. Lys-165 acts as the Schiff-base intermediate with substrate in catalysis. Aceneuramate is bound by residues Thr-167, Gly-189, Asp-191, Glu-192, and Ser-208.

It belongs to the DapA family. NanA subfamily. In terms of assembly, homotetramer.

The protein localises to the cytoplasm. It carries out the reaction aceneuramate = aldehydo-N-acetyl-D-mannosamine + pyruvate. Its pathway is amino-sugar metabolism; N-acetylneuraminate degradation; D-fructose 6-phosphate from N-acetylneuraminate: step 1/5. Its function is as follows. Catalyzes the reversible aldol cleavage of N-acetylneuraminic acid (sialic acid; Neu5Ac) to form pyruvate and N-acetylmannosamine (ManNAc) via a Schiff base intermediate. In Salmonella typhimurium (strain LT2 / SGSC1412 / ATCC 700720), this protein is N-acetylneuraminate lyase.